The sequence spans 326 residues: D-amino-acid oxidase (326 aa).

G14, V15, I16, D36, S44, A48, A49, I50, and V157 together coordinate FAD. D-proline contacts are provided by Y219 and R274. The D-serine site is built by Y219 and R274. The FAD site is built by R274, G299, G300, G302, and T304. G300 is a D-proline binding site. D-serine is bound at residue G300.

It belongs to the DAMOX/DASOX family. In terms of assembly, homodimer. FAD is required as a cofactor.

The protein resides in the cytoplasm. It is found in the secreted. It localises to the cell wall. It catalyses the reaction a D-alpha-amino acid + O2 + H2O = a 2-oxocarboxylate + H2O2 + NH4(+). The catalysed reaction is D-phenylalanine + O2 + H2O = 3-phenylpyruvate + H2O2 + NH4(+). It carries out the reaction D-lysine + O2 + H2O = 6-amino-2-oxohexanoate + H2O2 + NH4(+). The enzyme catalyses D-methionine + O2 + H2O = 4-methylsulfanyl-2-oxobutanoate + H2O2 + NH4(+). It catalyses the reaction D-arginine + O2 + H2O = 5-guanidino-2-oxopentanoate + H2O2 + NH4(+). The catalysed reaction is D-ornithine + O2 + H2O = 5-amino-2-oxopentanoate + H2O2 + NH4(+). It carries out the reaction D-leucine + O2 + H2O = 4-methyl-2-oxopentanoate + H2O2 + NH4(+). The enzyme catalyses D-alanine + O2 + H2O = pyruvate + H2O2 + NH4(+). It catalyses the reaction D-valine + O2 + H2O = 3-methyl-2-oxobutanoate + H2O2 + NH4(+). The catalysed reaction is D-histidine + O2 + H2O = 3-(imidazol-5-yl)pyruvate + H2O2 + NH4(+). Catalyzes the oxidative deamination of D-amino acids with broad substrate specificity. The polypeptide is D-amino-acid oxidase (Glutamicibacter protophormiae (Brevibacterium protophormiae)).